The following is a 79-amino-acid chain: uncharacterized protein (79 aa).

The N-terminal stretch at 1 to 24 is a signal peptide; it reads MNKFLNLIGLAFVLVLCAFSCSNA. The LysM domain maps to 32 to 78; the sequence is SWHVAQKGYTCYDMATSCKVTLDQFMRTNKLDNNACKLVQIGRKYCC.

The protein localises to the secreted. This is an uncharacterized protein from Dictyostelium discoideum (Social amoeba).